We begin with the raw amino-acid sequence, 395 residues long: G-protein coupled receptor 182 (395 aa).

At 1-53 (MSVIPSPRPVSTLEPDNDFRDIHNWTELLHLFNQTFTDCHIEFNENTKHVVLF) the chain is on the extracellular side. N-linked (GlcNAc...) asparagine glycosylation is found at asparagine 24 and asparagine 33. Residues 54–75 (VFYLAIFVVGLVENVLVICVNC) form a helical membrane-spanning segment. Topologically, residues 76 to 86 (RRSGRVGMLNL) are cytoplasmic. The helical transmembrane segment at 87 to 109 (YILNMAIADLGIILSLPVWMLEV) threads the bilayer. The Extracellular segment spans residues 110–123 (MLEYTWLWGSFSCR). Residues cysteine 122 and cysteine 198 are joined by a disulfide bond. The chain crosses the membrane as a helical span at residues 124-145 (FIHYFYLVNMYSSIFFLTCLSI). The Cytoplasmic portion of the chain corresponds to 146–166 (DRYVTLTNTSPSWQRHQHRIR). A helical transmembrane segment spans residues 167-189 (RAVCAGVWVLSAIIPLPEVVHIQ). Residues 190-213 (LLDGSEPMCLFLAPFETYSAWALA) are Extracellular-facing. Residues 214 to 235 (VALSATILGFLLPFLLIAVFNI) form a helical membrane-spanning segment. Over 236-254 (LTACRLRRQRQTESRRHCL) the chain is Cytoplasmic. Residues 255-276 (LMWAYIVVFAICWLPYQVTMLL) traverse the membrane as a helical segment. The Extracellular portion of the chain corresponds to 277–295 (LTLHGTHIFLHCHLVNLLY). The helical transmembrane segment at 296-316 (FFYEIIDCFSMLHCVANPILY) threads the bilayer. At 317-395 (NFLSPSFRGR…QTPHLHSAIL (79 aa)) the chain is on the cytoplasmic side. Serine 329 is modified (phosphoserine).

This sequence belongs to the G-protein coupled receptor 1 family. As to expression, expressed in liver and lung.

Its subcellular location is the cell membrane. In terms of biological role, orphan receptor. In Mus musculus (Mouse), this protein is G-protein coupled receptor 182 (Gpr182).